Reading from the N-terminus, the 319-residue chain is Chromoplast-specific carotenoid-associated protein C1, chromoplastic (319 aa).

A chromoplast-targeting transit peptide spans 1 to 55; that stretch reads MTSIAFWNAFTVNPFPAAARRSPPPLTPFTSGALSPARKPRILEISHPRTLPSFR.

Belongs to the PAP/fibrillin family. In terms of tissue distribution, expressed in flower buds and floral lip tissues. Not detected in roots and leaves. Specifically expressed in conical papillate cells of adaxial epidermis of lip tissues.

It is found in the plastid. The protein localises to the chromoplast. May be involved in carotenoid sequestration within chromoplasts. The chain is Chromoplast-specific carotenoid-associated protein C1, chromoplastic (CHRC1) from Oncidium hybrid cultivar (Orchid).